The sequence spans 941 residues: Lysine-specific demethylase 7A (941 aa).

The PHD-type zinc finger occupies 37-88; it reads PVYCVCRQPYDVNRFMIECDICKDWFHGSCVGVEEHHAVDIDLYHCPNCAVL. A linker region spans residues 97-114; it reads RRNWHRHDYTEIDDGSKP. The JmjC domain occupies 230 to 386; it reads FSDTKMSELV…MQLRCYEMEK (157 aa). Thr-279 contributes to the substrate binding site. Fe cation contacts are provided by His-282 and Asp-284. Lys-299 contacts substrate. Residue His-354 participates in Fe cation binding. Disordered stretches follow at residues 597-633, 677-700, and 819-921; these read QSLY…EHEE, TTEE…KEES, and QDLS…MATA. Ser-604 carries the post-translational modification Phosphoserine. Basic and acidic residues-rich tracts occupy residues 618-633 and 685-700; these read MKIE…EHEE and GDEK…KEES. The segment covering 834–876 has biased composition (polar residues); it reads SEISQRVQSRNYVDSSGSSLQNGKYMQNSNLTSGACQISNGSL.

This sequence belongs to the JHDM1 histone demethylase family. JHDM1D subfamily. It depends on Fe(2+) as a cofactor.

The protein localises to the nucleus. It catalyses the reaction N(6),N(6)-dimethyl-L-lysyl(9)-[histone H3] + 2 2-oxoglutarate + 2 O2 = L-lysyl(9)-[histone H3] + 2 formaldehyde + 2 succinate + 2 CO2. The enzyme catalyses N(6),N(6)-dimethyl-L-lysyl(27)-[histone H3] + 2 2-oxoglutarate + 2 O2 = L-lysyl(27)-[histone H3] + 2 formaldehyde + 2 succinate + 2 CO2. It carries out the reaction N(6),N(6)-dimethyl-L-lysyl(36)-[histone H3] + 2-oxoglutarate + O2 = N(6)-methyl-L-lysyl(36)-[histone H3] + formaldehyde + succinate + CO2. The catalysed reaction is N(6)-methyl-L-lysyl(20)-[histone H4] + 2-oxoglutarate + O2 = L-lysyl(20)-[histone H4] + formaldehyde + succinate + CO2. Histone demethylase required for brain development. Specifically demethylates dimethylated 'Lys-9', 'Lys-27' and 'Lys-36' (H3K9me2, H3K27me2, H3K36me2, respectively) of histone H3 and monomethylated histone H4 'Lys-20' residue (H4K20Me1), thereby playing a central role in histone code. Specifically binds trimethylated 'Lys-4' of histone H3 (H3K4me3), affecting histone demethylase specificity: in presence of H3K4me3, it has no demethylase activity toward H3K9me2, while it has high activity toward H3K27me2. Demethylates H3K9me2 in absence of H3K4me3. Has activity toward H4K20Me1 only when nucleosome is used as a substrate and when not histone octamer is used as substrate. This Homo sapiens (Human) protein is Lysine-specific demethylase 7A (KDM7A).